The following is a 339-amino-acid chain: Beta-ketoacyl-[acyl-carrier-protein] synthase III (339 aa).

Catalysis depends on residues cysteine 119 and histidine 262. The interval 263-267 (QANQR) is ACP-binding. The active site involves asparagine 292.

The protein belongs to the thiolase-like superfamily. FabH family. As to quaternary structure, homodimer.

It is found in the cytoplasm. The enzyme catalyses malonyl-[ACP] + acetyl-CoA + H(+) = 3-oxobutanoyl-[ACP] + CO2 + CoA. It functions in the pathway lipid metabolism; fatty acid biosynthesis. Its function is as follows. Catalyzes the condensation reaction of fatty acid synthesis by the addition to an acyl acceptor of two carbons from malonyl-ACP. Catalyzes the first condensation reaction which initiates fatty acid synthesis and may therefore play a role in governing the total rate of fatty acid production. Possesses both acetoacetyl-ACP synthase and acetyl transacylase activities. Its substrate specificity determines the biosynthesis of branched-chain and/or straight-chain of fatty acids. In Prochlorococcus marinus (strain MIT 9313), this protein is Beta-ketoacyl-[acyl-carrier-protein] synthase III.